A 215-amino-acid chain; its full sequence is Small ribosomal subunit protein uS7 (215 aa).

Belongs to the universal ribosomal protein uS7 family. Part of the 30S ribosomal subunit.

One of the primary rRNA binding proteins, it binds directly to 16S rRNA where it nucleates assembly of the head domain of the 30S subunit. Is located at the subunit interface close to the decoding center. This chain is Small ribosomal subunit protein uS7, found in Thermococcus onnurineus (strain NA1).